Consider the following 474-residue polypeptide: Serine/threonine-protein kinase ksp1 (474 aa).

The region spanning Tyr9–Thr280 is the Protein kinase domain. ATP is bound by residues Leu15–Val23 and Lys43. Asp137 functions as the Proton acceptor in the catalytic mechanism. Residues Val345 to Ser373 form a disordered region. Residues Ser350 to Pro363 show a composition bias toward low complexity. Phosphoserine occurs at positions 353, 354, 357, 378, 404, and 413.

It belongs to the protein kinase superfamily. Ser/Thr protein kinase family.

The protein localises to the cytoplasm. The protein resides in the nucleus. The catalysed reaction is L-seryl-[protein] + ATP = O-phospho-L-seryl-[protein] + ADP + H(+). The enzyme catalyses L-threonyl-[protein] + ATP = O-phospho-L-threonyl-[protein] + ADP + H(+). In Schizosaccharomyces pombe (strain 972 / ATCC 24843) (Fission yeast), this protein is Serine/threonine-protein kinase ksp1 (ksp1).